The chain runs to 287 residues: ATP synthase gamma chain (287 aa).

This sequence belongs to the ATPase gamma chain family. F-type ATPases have 2 components, CF(1) - the catalytic core - and CF(0) - the membrane proton channel. CF(1) has five subunits: alpha(3), beta(3), gamma(1), delta(1), epsilon(1). CF(0) has three main subunits: a, b and c.

The protein localises to the cell inner membrane. Produces ATP from ADP in the presence of a proton gradient across the membrane. The gamma chain is believed to be important in regulating ATPase activity and the flow of protons through the CF(0) complex. The protein is ATP synthase gamma chain of Escherichia fergusonii (strain ATCC 35469 / DSM 13698 / CCUG 18766 / IAM 14443 / JCM 21226 / LMG 7866 / NBRC 102419 / NCTC 12128 / CDC 0568-73).